We begin with the raw amino-acid sequence, 78 residues long: TP53-regulated inhibitor of apoptosis 1 (78 aa).

Residues 1–52 (MNSVGEECTDMKREYDQCFNRWFAEKFLKGECSGDPCTELFRRYRDCVQKAI) adopt a coiled-coil conformation. A CHCH domain is found at 5–55 (GEECTDMKREYDQCFNRWFAEKFLKGECSGDPCTELFRRYRDCVQKAIKDK). 2 short sequence motifs (cx9C motif) span residues 8-18 (CTDMKREYDQC) and 37-47 (CTELFRRYRDC). 2 disulfides stabilise this stretch: C8–C47 and C18–C37.

The protein belongs to the TRIAP1/MDM35 family. Monomer. Forms a complex with prelid1 in the mitochondrion intermembrane space. Interacts with prelid3a. Expressed in the developing pronephros.

Its subcellular location is the mitochondrion. The protein localises to the mitochondrion intermembrane space. It catalyses the reaction a 1,2-diacyl-sn-glycero-3-phosphate(in) = a 1,2-diacyl-sn-glycero-3-phosphate(out). Involved in the modulation of the mitochondrial apoptotic pathway by ensuring the accumulation of cardiolipin (CL) in mitochondrial membranes. The triap1:prelid1 complex probably functions as a phosphatidic acid (PA) transporter across the mitochondrion intermembrane space to provide PA for cardiolipin CL synthesis in the inner membrane. Likewise, the triap1:prelid3a complex mediates the transfer of phosphatidic acid (PA) between liposomes (in vitro) and probably functions as a PA transporter across the mitochondrion intermembrane space (in vivo). Mediates cell survival by inhibiting activation of caspase-9 which prevents induction of apoptosis. Required for pronephros development; probably involved at an early stage in the formation of pronephric components derived from the somatic layer. This is TP53-regulated inhibitor of apoptosis 1 from Xenopus tropicalis (Western clawed frog).